Here is a 256-residue protein sequence, read N- to C-terminus: MKLMMYSIKMRSAKGGPHEEGGKHISGAERILREDEIEEELINVYRRAITHEKGKPDFINLKIEAIDEDKILYKKRLNIIQHKVSSKEEGLKLAKELLIKNTVSEEAAKEGISSIQKLKESIHGAMLLDKDSGKRIDDKGIKGVRVTGIASADIKKYKESLKRDGREGLHLEEALILASKIASCKAIVAELCWSDDPSYVIGYVGTKENYHRIPILKDKGNPVGGRVFFVDTSQLNDNYTLEDLIDYLEKQIVLIE.

Belongs to the BioW family. As to quaternary structure, homodimer. Requires Mg(2+) as cofactor.

It catalyses the reaction heptanedioate + ATP + CoA = 6-carboxyhexanoyl-CoA + AMP + diphosphate. The protein operates within metabolic intermediate metabolism; pimeloyl-CoA biosynthesis; pimeloyl-CoA from pimelate: step 1/1. Its function is as follows. Catalyzes the transformation of pimelate into pimeloyl-CoA with concomitant hydrolysis of ATP to AMP. The sequence is that of 6-carboxyhexanoate--CoA ligase from Methanobrevibacter ruminantium (strain ATCC 35063 / DSM 1093 / JCM 13430 / OCM 146 / M1) (Methanobacterium ruminantium).